The sequence spans 518 residues: Glutamate--cysteine ligase (518 aa).

Belongs to the glutamate--cysteine ligase type 1 family. Type 1 subfamily.

The enzyme catalyses L-cysteine + L-glutamate + ATP = gamma-L-glutamyl-L-cysteine + ADP + phosphate + H(+). It participates in sulfur metabolism; glutathione biosynthesis; glutathione from L-cysteine and L-glutamate: step 1/2. The sequence is that of Glutamate--cysteine ligase from Escherichia coli O127:H6 (strain E2348/69 / EPEC).